A 454-amino-acid chain; its full sequence is Argininosuccinate synthase (454 aa).

ATP is bound by residues 17–25 (AFSGGLDTS) and A43. L-citrulline is bound at residue Y99. Residues G129 and T131 each contribute to the ATP site. Residues T131, N135, and D136 each contribute to the L-aspartate site. An L-citrulline-binding site is contributed by N135. D136 provides a ligand contact to ATP. Positions 139 and 192 each coordinate L-citrulline. D194 provides a ligand contact to ATP. Positions 201, 203, and 280 each coordinate L-citrulline.

It belongs to the argininosuccinate synthase family. Type 2 subfamily. As to quaternary structure, homotetramer.

It is found in the cytoplasm. It catalyses the reaction L-citrulline + L-aspartate + ATP = 2-(N(omega)-L-arginino)succinate + AMP + diphosphate + H(+). Its pathway is amino-acid biosynthesis; L-arginine biosynthesis; L-arginine from L-ornithine and carbamoyl phosphate: step 2/3. In Yersinia enterocolitica serotype O:8 / biotype 1B (strain NCTC 13174 / 8081), this protein is Argininosuccinate synthase.